Here is a 229-residue protein sequence, read N- to C-terminus: Flagellar L-ring protein (229 aa).

Positions 1–23 (MLSRLGARALVCLAGVAMLAASG) are cleaved as a signal peptide. Residue cysteine 24 is the site of N-palmitoyl cysteine attachment. Residue cysteine 24 is the site of S-diacylglycerol cysteine attachment.

The protein belongs to the FlgH family. In terms of assembly, the basal body constitutes a major portion of the flagellar organelle and consists of four rings (L,P,S, and M) mounted on a central rod.

The protein localises to the cell outer membrane. The protein resides in the bacterial flagellum basal body. Functionally, assembles around the rod to form the L-ring and probably protects the motor/basal body from shearing forces during rotation. The polypeptide is Flagellar L-ring protein (Cupriavidus taiwanensis (strain DSM 17343 / BCRC 17206 / CCUG 44338 / CIP 107171 / LMG 19424 / R1) (Ralstonia taiwanensis (strain LMG 19424))).